The following is a 743-amino-acid chain: Catalase-peroxidase (743 aa).

The segment at 1 to 22 (MEKQSNDAAVAGAPNDHGAAKC) is disordered. Residues 105-227 (WHSAGTYRIT…LGAVQMGLIY (123 aa)) constitute a cross-link (tryptophyl-tyrosyl-methioninium (Trp-Tyr) (with M-253)). Residue histidine 106 is the Proton acceptor of the active site. The segment at residues 227–253 (YVNPEGPNGNPDPVAAAKDIRETFFRM) is a cross-link (tryptophyl-tyrosyl-methioninium (Tyr-Met) (with W-105)). Histidine 268 is a heme b binding site.

The protein belongs to the peroxidase family. Peroxidase/catalase subfamily. As to quaternary structure, homodimer or homotetramer. It depends on heme b as a cofactor. In terms of processing, formation of the three residue Trp-Tyr-Met cross-link is important for the catalase, but not the peroxidase activity of the enzyme.

The enzyme catalyses H2O2 + AH2 = A + 2 H2O. It carries out the reaction 2 H2O2 = O2 + 2 H2O. Bifunctional enzyme with both catalase and broad-spectrum peroxidase activity. The protein is Catalase-peroxidase of Solibacter usitatus (strain Ellin6076).